We begin with the raw amino-acid sequence, 499 residues long: Cytochrome P450 ARB_01131 (499 aa).

Residues 1-21 form the signal peptide; the sequence is MLSLIVACLVLPLICYKLVRS. A glycan (N-linked (GlcNAc...) asparagine) is linked at asparagine 23. Cysteine 437 is a heme binding site.

It belongs to the cytochrome P450 family. Requires heme as cofactor.

Functionally, together with an NADPH cytochrome P450 the enzyme system catalyzes the terminal hydroxylation as the first step in the assimilation of alkanes and fatty acids. The sequence is that of Cytochrome P450 ARB_01131 from Arthroderma benhamiae (strain ATCC MYA-4681 / CBS 112371) (Trichophyton mentagrophytes).